The following is an 850-amino-acid chain: Trimethylamine-N-oxide reductase (850 aa).

The segment at residues 1–39 is a signal peptide (tat-type signal); the sequence is MKNKDSLHVSRRRFLAQLGGLTVAGMLGPSLLTPRSARA. Serine 191 is a Mo-bis(molybdopterin guanine dinucleotide) binding site.

The protein belongs to the prokaryotic molybdopterin-containing oxidoreductase family. It depends on Mo-bis(molybdopterin guanine dinucleotide) as a cofactor. Predicted to be exported by the Tat system. The position of the signal peptide cleavage has not been experimentally proven.

It is found in the periplasm. It carries out the reaction trimethylamine + 2 Fe(III)-[cytochrome c] + H2O = trimethylamine N-oxide + 2 Fe(II)-[cytochrome c] + 3 H(+). In terms of biological role, reduces trimethylamine-N-oxide (TMAO) into trimethylamine; an anaerobic reaction coupled to energy-yielding reactions. This Salmonella typhi protein is Trimethylamine-N-oxide reductase (torA).